The sequence spans 148 residues: Flavodoxin (148 aa).

A Flavodoxin-like domain is found at 4-145; it reads ALIVYGSTTG…DIVGWAHDVR (142 aa).

It belongs to the flavodoxin family. FMN is required as a cofactor.

Low-potential electron donor to a number of redox enzymes. This is Flavodoxin from Nitratidesulfovibrio vulgaris (strain ATCC 29579 / DSM 644 / CCUG 34227 / NCIMB 8303 / VKM B-1760 / Hildenborough) (Desulfovibrio vulgaris).